Here is a 285-residue protein sequence, read N- to C-terminus: Bifunctional protein FolD (285 aa).

NADP(+) is bound by residues 165–167 (GRS), Ser-190, and Ile-231.

Belongs to the tetrahydrofolate dehydrogenase/cyclohydrolase family. As to quaternary structure, homodimer.

The catalysed reaction is (6R)-5,10-methylene-5,6,7,8-tetrahydrofolate + NADP(+) = (6R)-5,10-methenyltetrahydrofolate + NADPH. The enzyme catalyses (6R)-5,10-methenyltetrahydrofolate + H2O = (6R)-10-formyltetrahydrofolate + H(+). The protein operates within one-carbon metabolism; tetrahydrofolate interconversion. In terms of biological role, catalyzes the oxidation of 5,10-methylenetetrahydrofolate to 5,10-methenyltetrahydrofolate and then the hydrolysis of 5,10-methenyltetrahydrofolate to 10-formyltetrahydrofolate. The polypeptide is Bifunctional protein FolD (Acetivibrio thermocellus (strain ATCC 27405 / DSM 1237 / JCM 9322 / NBRC 103400 / NCIMB 10682 / NRRL B-4536 / VPI 7372) (Clostridium thermocellum)).